The sequence spans 92 residues: Small ribosomal subunit protein uS19 (92 aa).

It belongs to the universal ribosomal protein uS19 family.

In terms of biological role, protein S19 forms a complex with S13 that binds strongly to the 16S ribosomal RNA. The chain is Small ribosomal subunit protein uS19 from Bartonella henselae (strain ATCC 49882 / DSM 28221 / CCUG 30454 / Houston 1) (Rochalimaea henselae).